The sequence spans 657 residues: Glycogen debranching enzyme (657 aa).

The active-site Nucleophile is the D336. E371 serves as the catalytic Proton donor. Basic and acidic residues predominate over residues 458–467 (NEANGEENRD). The interval 458 to 479 (NEANGEENRDGTNNNYSNNHGK) is disordered.

Belongs to the glycosyl hydrolase 13 family.

The catalysed reaction is Hydrolysis of (1-&gt;6)-alpha-D-glucosidic linkages to branches with degrees of polymerization of three or four glucose residues in limit dextrin.. It functions in the pathway glycan degradation; glycogen degradation. Its function is as follows. Removes maltotriose and maltotetraose chains that are attached by 1,6-alpha-linkage to the limit dextrin main chain, generating a debranched limit dextrin. The chain is Glycogen debranching enzyme from Shigella boydii serotype 18 (strain CDC 3083-94 / BS512).